Consider the following 386-residue polypeptide: Mannitol-1-phosphate 5-dehydrogenase (386 aa).

4 to 15 is a binding site for NAD(+); that stretch reads AVHFGAGNIGRG.

The protein belongs to the mannitol dehydrogenase family.

It carries out the reaction D-mannitol 1-phosphate + NAD(+) = beta-D-fructose 6-phosphate + NADH + H(+). The sequence is that of Mannitol-1-phosphate 5-dehydrogenase from Oceanobacillus iheyensis (strain DSM 14371 / CIP 107618 / JCM 11309 / KCTC 3954 / HTE831).